Consider the following 376-residue polypeptide: S-adenosylmethionine synthase (376 aa).

Position 15 (His-15) interacts with ATP. Residue Asp-17 participates in Mg(2+) binding. Position 43 (Glu-43) interacts with K(+). 2 residues coordinate L-methionine: Glu-56 and Gln-92. The flexible loop stretch occupies residues 92–102 (QSKEIANQVDR). ATP contacts are provided by residues 156-158 (DMK), Asp-231, 237-238 (RK), Ala-254, and Lys-258. Asp-231 lines the L-methionine pocket. Lys-262 is a binding site for L-methionine.

It belongs to the AdoMet synthase family. As to quaternary structure, homotetramer; dimer of dimers. Mg(2+) is required as a cofactor. Requires K(+) as cofactor.

Its subcellular location is the cytoplasm. The enzyme catalyses L-methionine + ATP + H2O = S-adenosyl-L-methionine + phosphate + diphosphate. Its pathway is amino-acid biosynthesis; S-adenosyl-L-methionine biosynthesis; S-adenosyl-L-methionine from L-methionine: step 1/1. Functionally, catalyzes the formation of S-adenosylmethionine (AdoMet) from methionine and ATP. The overall synthetic reaction is composed of two sequential steps, AdoMet formation and the subsequent tripolyphosphate hydrolysis which occurs prior to release of AdoMet from the enzyme. This is S-adenosylmethionine synthase from Mycoplasmopsis pulmonis (strain UAB CTIP) (Mycoplasma pulmonis).